Consider the following 229-residue polypeptide: Large ribosomal subunit protein uL1 (229 aa).

Belongs to the universal ribosomal protein uL1 family. Part of the 50S ribosomal subunit.

In terms of biological role, binds directly to 23S rRNA. The L1 stalk is quite mobile in the ribosome, and is involved in E site tRNA release. Protein L1 is also a translational repressor protein, it controls the translation of the L11 operon by binding to its mRNA. This is Large ribosomal subunit protein uL1 from Lactiplantibacillus plantarum (strain ATCC BAA-793 / NCIMB 8826 / WCFS1) (Lactobacillus plantarum).